Consider the following 355-residue polypeptide: Phosphate acyltransferase (355 aa).

Belongs to the PlsX family. In terms of assembly, homodimer. Probably interacts with PlsY.

The protein resides in the cytoplasm. The enzyme catalyses a fatty acyl-[ACP] + phosphate = an acyl phosphate + holo-[ACP]. It functions in the pathway lipid metabolism; phospholipid metabolism. Its function is as follows. Catalyzes the reversible formation of acyl-phosphate (acyl-PO(4)) from acyl-[acyl-carrier-protein] (acyl-ACP). This enzyme utilizes acyl-ACP as fatty acyl donor, but not acyl-CoA. The sequence is that of Phosphate acyltransferase from Erythrobacter litoralis (strain HTCC2594).